A 461-amino-acid chain; its full sequence is Cysteine--tRNA ligase (461 aa).

C28 is a Zn(2+) binding site. A 'HIGH' region motif is present at residues 30–40; it reads ITVYDLCHIGH. C209, H234, and E238 together coordinate Zn(2+). Positions 266 to 270 match the 'KMSKS' region motif; the sequence is KMSKS. Residue K269 coordinates ATP.

The protein belongs to the class-I aminoacyl-tRNA synthetase family. Monomer. Requires Zn(2+) as cofactor.

Its subcellular location is the cytoplasm. The catalysed reaction is tRNA(Cys) + L-cysteine + ATP = L-cysteinyl-tRNA(Cys) + AMP + diphosphate. This Escherichia coli O17:K52:H18 (strain UMN026 / ExPEC) protein is Cysteine--tRNA ligase.